Here is a 229-residue protein sequence, read N- to C-terminus: Putative N-acetylmannosamine-6-phosphate 2-epimerase (229 aa).

Belongs to the NanE family.

It catalyses the reaction an N-acyl-D-glucosamine 6-phosphate = an N-acyl-D-mannosamine 6-phosphate. It participates in amino-sugar metabolism; N-acetylneuraminate degradation; D-fructose 6-phosphate from N-acetylneuraminate: step 3/5. Converts N-acetylmannosamine-6-phosphate (ManNAc-6-P) to N-acetylglucosamine-6-phosphate (GlcNAc-6-P). This is Putative N-acetylmannosamine-6-phosphate 2-epimerase from Actinobacillus pleuropneumoniae serotype 3 (strain JL03).